A 497-amino-acid chain; its full sequence is Lysophospholipid acyltransferase 5 (497 aa).

A run of 6 helical transmembrane segments spans residues 31–51, 74–94, 100–120, 173–193, 213–235, and 264–286; these read LLTI…ISVI, GLDT…VLLL, IFLA…YFYT, LELL…QFPF, AGVR…LRYL, and SLYK…GLTY. Catalysis depends on residues asparagine 322 and histidine 358. A helical membrane pass occupies residues 339–361; it reads FLNNRTISYGAALGFLAVWHGYH. A glycan (N-linked (GlcNAc...) asparagine) is linked at asparagine 398. 2 helical membrane-spanning segments follow: residues 408-428 and 435-455; these read FITL…AFVF and IVVY…WAAF. The disordered stretch occupies residues 469-497; that stretch reads KLAGEDQKLQDSNTDKLVEEKKPEDKKSE. Residues 470–497 are compositionally biased toward basic and acidic residues; the sequence is LAGEDQKLQDSNTDKLVEEKKPEDKKSE. Serine 480 carries the phosphoserine modification.

The protein belongs to the membrane-bound acyltransferase family. In terms of tissue distribution, during gastrulation, expressed mainly along the midline in the presumptive mesoderm. During germ band elongation, expressed in mesoderm and endoderm primordia and in the cephalic furrow. Expression in mesoderm and endoderm lineages continues during germ band shortening. At the end of this process, no longer detected in somatic mesoderm or endoderm layer with expression restricted to anterior and posterior domains of the visceral mesoderm.

It localises to the endoplasmic reticulum. The protein localises to the membrane. It carries out the reaction a 1-acyl-sn-glycero-3-phospho-L-serine + an acyl-CoA = a 1,2-diacyl-sn-glycero-3-phospho-L-serine + CoA. The enzyme catalyses 1-(9Z-octadecenoyl)-sn-glycero-3-phospho-L-serine + (9Z)-hexadecenoyl-CoA = 1-(9Z-octadecenoyl)-2-(9Z-hexadecenoyl)-sn-glycero-3-phospho-L-serine + CoA. The catalysed reaction is a 1-acyl-sn-glycero-3-phosphocholine + an acyl-CoA = a 1,2-diacyl-sn-glycero-3-phosphocholine + CoA. It catalyses the reaction 1-hexadecanoyl-sn-glycero-3-phosphocholine + (9Z)-octadecenoyl-CoA = 1-hexadecanoyl-2-(9Z-octadecenoyl)-sn-glycero-3-phosphocholine + CoA. It carries out the reaction (9Z,12Z)-octadecadienoyl-CoA + 1-hexadecanoyl-sn-glycero-3-phosphocholine = 1-hexadecanoyl-2-(9Z,12Z-octadecadienoyl)-sn-glycero-3-phosphocholine + CoA. The enzyme catalyses (5Z,8Z,11Z,14Z)-eicosatetraenoyl-CoA + 1-hexadecanoyl-sn-glycero-3-phosphocholine = 1-hexadecanoyl-2-(5Z,8Z,11Z,14Z-eicosatetraenoyl)-sn-glycero-3-phosphocholine + CoA. The catalysed reaction is (9Z)-hexadecenoyl-CoA + 1-hexadecanoyl-sn-glycero-3-phosphocholine = 1-hexadecanoyl-2-(9Z-hexadecenoyl)-sn-glycero-3-phosphocholine + CoA. It participates in lipid metabolism; phospholipid metabolism. Functionally, acyltransferase that mediates the acylation of lysophospholipids to produce phospholipids (glycerophospholipids). Highest activity with lysophosphatidylcholine (1-acyl-sn-glycero-3-phosphocholine or LPC) producing phosphatidylcholine (1,2-diacyl-sn-glycero-3-phosphocholine or PC) (LPCAT activity), but also converts lysophosphatidylserine (1-acyl-2-hydroxy-sn-glycero-3-phospho-L-serine or LPS) to phosphatidylserine (1,2-diacyl-sn-glycero-3-phospho-L-serine or PS) (LPSAT activity). Has a preference for unsaturated fatty acids of at least 16 carbons such as oleoyl-CoA ((9Z)-octadecenoyl-CoA) and palmitoleoyl-CoA ((9Z)-hexadecenoyl-CoA). Glycerophospholipids are important structural and functional components of cellular membrane, acyl-chain remodeling regulates the molecular species distribution of glycerophospholipids which can affect membrane fluidity and curvature. Essential for fertility and viability together with Oysgedart (Oys). Required for germ cells to migrate into the mesoderm. This chain is Lysophospholipid acyltransferase 5, found in Drosophila melanogaster (Fruit fly).